A 554-amino-acid polypeptide reads, in one-letter code: Transcription factor 7-like 1-A (554 aa).

Over residues 1 to 11 the composition is skewed to gly residues; the sequence is MPQLNSGGGDE. The tract at residues 1–61 is interaction with CTNNB1-A; sequence MPQLNSGGGD…SENHSSDSDS (61 aa). 3 disordered regions span residues 1 to 73, 183 to 213, and 391 to 475; these read MPQL…REAF, GTPPGHLSPEIDPKTGIPRPPHPSELSPYYP, and WSAR…LTTK. Composition is skewed to basic and acidic residues over residues 17 to 32 and 52 to 73; these read ELIRFKDEGEQEEKSP and SENHSSDSDSEVERRPPPREAF. Positions 109–312 are interaction with AES and TLE4-A; it reads LGGHYLPNGA…SPNLHTKSNM (204 aa). Positions 324 to 392 form a DNA-binding region, HMG box; it reads IKKPLNAFML…LHSQLYPSWS (69 aa). Over residues 407–416 the composition is skewed to basic and acidic residues; sequence KQSPEMETHT. The interaction with CTBP-B stretch occupies residues 408–554; it reads QSPEMETHTK…PLSLVTKSSD (147 aa). A compositionally biased stretch (low complexity) spans 445–464; that stretch reads SPATPSAALASPAAPAATHS. The segment covering 465 to 474 has biased composition (polar residues); sequence EQAQPLSLTT.

Belongs to the TCF/LEF family. In terms of assembly, interacts with csnk1e, ctnnb1-A, ctbp-B, dact1-A and gsk3b. May interact with ase and tle4-A. Phosphorylated. Phosphorylation by csnk1e promotes binding to ctnnb1-A while phosphorylation by gsk3b may reverse this effect.

Its subcellular location is the cytoplasm. The protein localises to the nucleus. In terms of biological role, participates in the Wnt signaling pathway. Binds to DNA and acts as a repressor in the absence of ctnnb1-A and possibly ctnnb1-B, and as an activator in the presence of these proteins. Required early in development for the establishment of the dorsal body axis in response to maternal Wnt signaling. Also required during development of the CNS for the establishment of dorsal-ventral patterning in the prospective diencephalon. The sequence is that of Transcription factor 7-like 1-A (tcf7l1-a) from Xenopus laevis (African clawed frog).